The sequence spans 186 residues: Large ribosomal subunit protein uL5 (186 aa).

This sequence belongs to the universal ribosomal protein uL5 family. As to quaternary structure, part of the 50S ribosomal subunit; part of the 5S rRNA/L5/L18/L25 subcomplex. Contacts the 5S rRNA and the P site tRNA. Forms a bridge to the 30S subunit in the 70S ribosome.

Functionally, this is one of the proteins that bind and probably mediate the attachment of the 5S RNA into the large ribosomal subunit, where it forms part of the central protuberance. In the 70S ribosome it contacts protein S13 of the 30S subunit (bridge B1b), connecting the 2 subunits; this bridge is implicated in subunit movement. Contacts the P site tRNA; the 5S rRNA and some of its associated proteins might help stabilize positioning of ribosome-bound tRNAs. This Ruegeria pomeroyi (strain ATCC 700808 / DSM 15171 / DSS-3) (Silicibacter pomeroyi) protein is Large ribosomal subunit protein uL5.